We begin with the raw amino-acid sequence, 108 residues long: U3-lycotoxin-Ls1w (108 aa).

The N-terminal stretch at 1–20 (MKFVLLFGVLLVTLFSYSSA) is a signal peptide. The propeptide occupies 21–44 (EMLDDFDQADEDELLSLIEKEEAR). Cystine bridges form between cysteine 48–cysteine 63, cysteine 55–cysteine 72, cysteine 62–cysteine 87, and cysteine 74–cysteine 85.

It belongs to the neurotoxin 19 (CSTX) family. 01 subfamily. As to expression, expressed by the venom gland.

The protein localises to the secreted. In Lycosa singoriensis (Wolf spider), this protein is U3-lycotoxin-Ls1w.